The chain runs to 137 residues: MPTIQQLVRKGREVLVEKSKSPALDSCPQRRGVCVRVYTTTPKKPNSAMRKVARVRLTNSKEVNSYIPGEGHNLQEHSIVLVRGGRVKDLPGVRYHIVRGTLDTAGVAGRTQRRSKYGAKRPKAGQAAAPAKGKGKK.

D89 is modified (3-methylthioaspartic acid). Residues 105–137 (AGVAGRTQRRSKYGAKRPKAGQAAAPAKGKGKK) form a disordered region. The segment covering 111-123 (TQRRSKYGAKRPK) has biased composition (basic residues). Over residues 124–137 (AGQAAAPAKGKGKK) the composition is skewed to low complexity.

The protein belongs to the universal ribosomal protein uS12 family. Part of the 30S ribosomal subunit. Contacts proteins S8 and S17. May interact with IF1 in the 30S initiation complex.

With S4 and S5 plays an important role in translational accuracy. Its function is as follows. Interacts with and stabilizes bases of the 16S rRNA that are involved in tRNA selection in the A site and with the mRNA backbone. Located at the interface of the 30S and 50S subunits, it traverses the body of the 30S subunit contacting proteins on the other side and probably holding the rRNA structure together. The combined cluster of proteins S8, S12 and S17 appears to hold together the shoulder and platform of the 30S subunit. The protein is Small ribosomal subunit protein uS12 of Phocaeicola vulgatus (strain ATCC 8482 / DSM 1447 / JCM 5826 / CCUG 4940 / NBRC 14291 / NCTC 11154) (Bacteroides vulgatus).